The chain runs to 70 residues: DNA-directed RNA polymerase subunit epsilon (70 aa).

This sequence belongs to the RNA polymerase subunit epsilon family. In terms of assembly, RNAP is composed of a core of 2 alpha, a beta and a beta' subunit. The core is associated with a delta subunit, and at least one of epsilon or omega. When a sigma factor is associated with the core the holoenzyme is formed, which can initiate transcription.

It catalyses the reaction RNA(n) + a ribonucleoside 5'-triphosphate = RNA(n+1) + diphosphate. Its function is as follows. A non-essential component of RNA polymerase (RNAP). The protein is DNA-directed RNA polymerase subunit epsilon of Leuconostoc mesenteroides subsp. mesenteroides (strain ATCC 8293 / DSM 20343 / BCRC 11652 / CCM 1803 / JCM 6124 / NCDO 523 / NBRC 100496 / NCIMB 8023 / NCTC 12954 / NRRL B-1118 / 37Y).